The chain runs to 264 residues: 3-methyl-2-oxobutanoate hydroxymethyltransferase (264 aa).

Residues aspartate 45 and aspartate 84 each contribute to the Mg(2+) site. 3-methyl-2-oxobutanoate is bound by residues 45-46, aspartate 84, and lysine 112; that span reads DS. Glutamate 114 serves as a coordination point for Mg(2+). The active-site Proton acceptor is glutamate 181.

It belongs to the PanB family. In terms of assembly, homodecamer; pentamer of dimers. Mg(2+) is required as a cofactor.

The protein resides in the cytoplasm. The catalysed reaction is 3-methyl-2-oxobutanoate + (6R)-5,10-methylene-5,6,7,8-tetrahydrofolate + H2O = 2-dehydropantoate + (6S)-5,6,7,8-tetrahydrofolate. Its pathway is cofactor biosynthesis; (R)-pantothenate biosynthesis; (R)-pantoate from 3-methyl-2-oxobutanoate: step 1/2. Its function is as follows. Catalyzes the reversible reaction in which hydroxymethyl group from 5,10-methylenetetrahydrofolate is transferred onto alpha-ketoisovalerate to form ketopantoate. This Shewanella sediminis (strain HAW-EB3) protein is 3-methyl-2-oxobutanoate hydroxymethyltransferase.